The sequence spans 262 residues: Hydroxyacylglutathione hydrolase (262 aa).

Residues His53, His55, Asp57, His58, His111, Asp128, and His166 each coordinate Zn(2+).

It belongs to the metallo-beta-lactamase superfamily. Glyoxalase II family. In terms of assembly, monomer. Requires Zn(2+) as cofactor.

It carries out the reaction an S-(2-hydroxyacyl)glutathione + H2O = a 2-hydroxy carboxylate + glutathione + H(+). The protein operates within secondary metabolite metabolism; methylglyoxal degradation; (R)-lactate from methylglyoxal: step 2/2. Thiolesterase that catalyzes the hydrolysis of S-D-lactoyl-glutathione to form glutathione and D-lactic acid. The sequence is that of Hydroxyacylglutathione hydrolase from Nitrosomonas europaea (strain ATCC 19718 / CIP 103999 / KCTC 2705 / NBRC 14298).